The primary structure comprises 615 residues: RNA polymerase sigma factor RpoD (615 aa).

Positions 177 to 215 (APTATHVGSELSQEDLDDDEDEDEEDGDDDAADDDNSID) are disordered. Acidic residues predominate over residues 188–214 (SQEDLDDDEDEDEEDGDDDAADDDNSI). The tract at residues 381-451 (MVEANLRLVI…TRSIADQART (71 aa)) is sigma-70 factor domain-2. The Interaction with polymerase core subunit RpoC motif lies at 405-408 (DLIQ). The interval 460–536 (ETINKLNRIS…DTTLELPLDS (77 aa)) is sigma-70 factor domain-3. Positions 549 to 602 (VLAGLTAREAKVLRMRFGIDMNTDHTLEEVGKQFDVTRERIRQIEAKALRKLRH) are sigma-70 factor domain-4. The segment at residues 575–594 (LEEVGKQFDVTRERIRQIEA) is a DNA-binding region (H-T-H motif).

This sequence belongs to the sigma-70 factor family. RpoD/SigA subfamily. In terms of assembly, interacts transiently with the RNA polymerase catalytic core.

It localises to the cytoplasm. Functionally, sigma factors are initiation factors that promote the attachment of RNA polymerase to specific initiation sites and are then released. This sigma factor is the primary sigma factor during exponential growth. This chain is RNA polymerase sigma factor RpoD, found in Salmonella typhi.